The chain runs to 239 residues: Riboflavin synthase (239 aa).

Lumazine-binding repeat units lie at residues 1-105 and 106-205; these read MFTG…MGGH and VVQG…EKQI. Residues 4-6, 54-56, 70-75, 109-111, lysine 145, 154-156, and 170-175 contribute to the 2,4-dihydroxypteridine site; these read GLV, CLT, GISPET, GHV, SLT, and SMVSYT.

Homotrimer.

The enzyme catalyses 2 6,7-dimethyl-8-(1-D-ribityl)lumazine + H(+) = 5-amino-6-(D-ribitylamino)uracil + riboflavin. It participates in cofactor biosynthesis; riboflavin biosynthesis; riboflavin from 2-hydroxy-3-oxobutyl phosphate and 5-amino-6-(D-ribitylamino)uracil: step 2/2. Its function is as follows. Catalyzes the dismutation of two molecules of 6,7-dimethyl-8-ribityllumazine, resulting in the formation of riboflavin and 5-amino-6-(D-ribitylamino)uracil. In Meyerozyma guilliermondii (strain ATCC 6260 / CBS 566 / DSM 6381 / JCM 1539 / NBRC 10279 / NRRL Y-324) (Yeast), this protein is Riboflavin synthase (RIB5).